We begin with the raw amino-acid sequence, 188 residues long: ADP-ribosylation factor J (188 aa).

GTP-binding positions include D34–T40, D75–Q79, and N134–D137.

Belongs to the small GTPase superfamily. Arf family.

Its subcellular location is the golgi apparatus. Functionally, GTP-binding protein that may be involved in protein trafficking. May modulate vesicle budding and uncoating within the Golgi apparatus. This Dictyostelium discoideum (Social amoeba) protein is ADP-ribosylation factor J (arrJ).